A 154-amino-acid polypeptide reads, in one-letter code: Endoribonuclease YbeY (154 aa).

Residues H113, H117, and H123 each contribute to the Zn(2+) site.

It belongs to the endoribonuclease YbeY family. Zn(2+) is required as a cofactor.

The protein localises to the cytoplasm. Functionally, single strand-specific metallo-endoribonuclease involved in late-stage 70S ribosome quality control and in maturation of the 3' terminus of the 16S rRNA. This is Endoribonuclease YbeY from Ehrlichia canis (strain Jake).